We begin with the raw amino-acid sequence, 99 residues long: Small ribosomal subunit protein bS16 (99 aa).

Residues 80-99 are disordered; the sequence is PPRQQNEAKRETAETAQPEA.

It belongs to the bacterial ribosomal protein bS16 family.

This is Small ribosomal subunit protein bS16 from Thermomicrobium roseum (strain ATCC 27502 / DSM 5159 / P-2).